We begin with the raw amino-acid sequence, 306 residues long: Ornithine carbamoyltransferase (306 aa).

Carbamoyl phosphate contacts are provided by residues 50–53, Gln77, Arg101, and 128–131; these read STRT and HPCQ. L-ornithine contacts are provided by residues Asn160, Asp224, and 228–229; that span reads SM. Residues 264–265 and Arg292 each bind carbamoyl phosphate; that span reads CL.

It belongs to the aspartate/ornithine carbamoyltransferase superfamily. OTCase family.

It is found in the cytoplasm. It catalyses the reaction carbamoyl phosphate + L-ornithine = L-citrulline + phosphate + H(+). It functions in the pathway amino-acid biosynthesis; L-arginine biosynthesis; L-arginine from L-ornithine and carbamoyl phosphate: step 1/3. Functionally, reversibly catalyzes the transfer of the carbamoyl group from carbamoyl phosphate (CP) to the N(epsilon) atom of ornithine (ORN) to produce L-citrulline. This is Ornithine carbamoyltransferase from Mycobacterium leprae (strain TN).